Consider the following 352-residue polypeptide: Protein TIFY 6B (352 aa).

A disordered region spans residues 1 to 71; that stretch reads MERDFLGLGS…KSGNYHLPHS (71 aa). Residues 17–26 are compositionally biased toward basic and acidic residues; it reads VKEETSESSR. The span at 34 to 54 shows a compositional bias: polar residues; that stretch reads MNWSFSNKVSASSSQFLSFRP. The region spanning 172–207 is the Tify domain; it reads PIGSPAQLTIFYAGSVCVYDDISPEKAKAIMLLAGN. A Jas motif is present at residues 302–326; that stretch reads PLARKASLARFLEKRKERVTSVSPY. Residues 304–311 carry the Nuclear localization signal motif; sequence ARKASLAR.

The protein belongs to the TIFY/JAZ family. Homo- and heterodimer. Interacts with COI1, MYC2, MYC3, MYC4, TIFY10A/JAZ1, TIFY10B/JAZ2, TIFY6A/JAZ4, TIFY5A/JAZ8, TIFY7/JAZ9, TIFY9/JAZ10 and TIFY3A/JAZ11. Interacts (via TIFY domain) with AFPH2/NINJA. In terms of processing, ubiquitinated. Targeted for degradation by the SCF(COI1) E3 ubiquitin ligase-proteasome pathway during jasmonate signaling. Srtongly expressed in root tips.

It is found in the nucleus. In terms of biological role, repressor of jasmonate responses. Jasmonoyl-isoleucine (JA-Ile) specifically promotes COI1-TIFY6B/JAZ3 interaction. Acts as a negative regulator of MYC2 function. Feed-back regulated by MYC2. This Arabidopsis thaliana (Mouse-ear cress) protein is Protein TIFY 6B (TIFY6B).